Consider the following 175-residue polypeptide: Nucleoside triphosphate/diphosphate phosphatase (175 aa).

Arg-23 serves as the catalytic Proton donor. Mg(2+) contacts are provided by Asn-87, Asp-103, Asp-105, Asp-107, Asp-120, and Glu-123.

This sequence belongs to the Ntdp family. Requires Mg(2+) as cofactor.

It catalyses the reaction a ribonucleoside 5'-triphosphate + H2O = a ribonucleoside 5'-diphosphate + phosphate + H(+). It carries out the reaction a ribonucleoside 5'-diphosphate + H2O = a ribonucleoside 5'-phosphate + phosphate + H(+). Its function is as follows. Has nucleoside phosphatase activity towards nucleoside triphosphates and nucleoside diphosphates. In Listeria innocua serovar 6a (strain ATCC BAA-680 / CLIP 11262), this protein is Nucleoside triphosphate/diphosphate phosphatase.